We begin with the raw amino-acid sequence, 296 residues long: Formamidopyrimidine-DNA glycosylase (296 aa).

P2 functions as the Schiff-base intermediate with DNA in the catalytic mechanism. The active-site Proton donor is E3. The active-site Proton donor; for beta-elimination activity is the K61. 3 residues coordinate DNA: H95, R122, and K169. An FPG-type zinc finger spans residues 255–289 (NAYGRNDQPCARCGTPIQRETFMNRSSYSCPRCQP). The active-site Proton donor; for delta-elimination activity is the R279.

Belongs to the FPG family. In terms of assembly, monomer. It depends on Zn(2+) as a cofactor.

The catalysed reaction is Hydrolysis of DNA containing ring-opened 7-methylguanine residues, releasing 2,6-diamino-4-hydroxy-5-(N-methyl)formamidopyrimidine.. The enzyme catalyses 2'-deoxyribonucleotide-(2'-deoxyribose 5'-phosphate)-2'-deoxyribonucleotide-DNA = a 3'-end 2'-deoxyribonucleotide-(2,3-dehydro-2,3-deoxyribose 5'-phosphate)-DNA + a 5'-end 5'-phospho-2'-deoxyribonucleoside-DNA + H(+). Its function is as follows. Involved in base excision repair of DNA damaged by oxidation or by mutagenic agents. Acts as a DNA glycosylase that recognizes and removes damaged bases. Has a preference for oxidized purines, such as 7,8-dihydro-8-oxoguanine (8-oxoG). Has AP (apurinic/apyrimidinic) lyase activity and introduces nicks in the DNA strand. Cleaves the DNA backbone by beta-delta elimination to generate a single-strand break at the site of the removed base with both 3'- and 5'-phosphates. This Thermobifida fusca (strain YX) protein is Formamidopyrimidine-DNA glycosylase.